A 398-amino-acid chain; its full sequence is Candidapepsin-3 (398 aa).

The first 18 residues, 1–18 (MFLKNIFIALAIALLADA), serve as a signal peptide directing secretion. A propeptide spans 19–58 (TPTTSNNSPGFVALNFDVIKTHKNVTGPQGEINTNVNVKR) (activation peptide). A glycan (N-linked (GlcNAc...) asparagine) is linked at Asn42. The region spanning 72–384 (YASDITVGSN…DLDDNEISLA (313 aa)) is the Peptidase A1 domain. Asp90 is a catalytic residue. Pepstatin A is bound at residue 90 to 92 (DTG). Residues 103–112 (VSCQAGQGQD) show a composition bias toward polar residues. The disordered stretch occupies residues 103–139 (VSCQAGQGQDPNFCKNEGTYSPSSSSSSQNLNSPFSI). A disulfide bond links Cys105 and Cys116. The span at 123 to 138 (SPSSSSSSQNLNSPFS) shows a compositional bias: low complexity. Residues 140–143 (EYGD) and 274–278 (DSGTT) contribute to the pepstatin A site. The active site involves Asp274. A disulfide bridge links Cys312 with Cys350. Asn313 carries an N-linked (GlcNAc...) asparagine glycan.

This sequence belongs to the peptidase A1 family. In terms of processing, O-glycosylated.

It is found in the secreted. The enzyme catalyses Preferential cleavage at the carboxyl of hydrophobic amino acids, but fails to cleave 15-Leu-|-Tyr-16, 16-Tyr-|-Leu-17 and 24-Phe-|-Phe-25 of insulin B chain. Activates trypsinogen, and degrades keratin.. This chain is Candidapepsin-3 (SAP3), found in Candida albicans (strain WO-1) (Yeast).